We begin with the raw amino-acid sequence, 155 residues long: Photosystem I reaction center subunit XI (155 aa).

A run of 2 helical transmembrane segments spans residues 80–102 (LISG…LVSF) and 117–139 (GWSQ…AFFL).

The protein belongs to the PsaL family.

It localises to the cellular thylakoid membrane. The chain is Photosystem I reaction center subunit XI from Thermosynechococcus vestitus (strain NIES-2133 / IAM M-273 / BP-1).